We begin with the raw amino-acid sequence, 264 residues long: 2-C-methyl-D-erythritol 4-phosphate cytidylyltransferase (264 aa).

The tract at residues 234 to 264 is disordered; that stretch reads ARDPESAHPQSSVLASAFSGPGSRVSGPEEI.

The protein belongs to the IspD/TarI cytidylyltransferase family. IspD subfamily.

It catalyses the reaction 2-C-methyl-D-erythritol 4-phosphate + CTP + H(+) = 4-CDP-2-C-methyl-D-erythritol + diphosphate. The protein operates within isoprenoid biosynthesis; isopentenyl diphosphate biosynthesis via DXP pathway; isopentenyl diphosphate from 1-deoxy-D-xylulose 5-phosphate: step 2/6. Catalyzes the formation of 4-diphosphocytidyl-2-C-methyl-D-erythritol from CTP and 2-C-methyl-D-erythritol 4-phosphate (MEP). This is 2-C-methyl-D-erythritol 4-phosphate cytidylyltransferase from Xanthomonas euvesicatoria pv. vesicatoria (strain 85-10) (Xanthomonas campestris pv. vesicatoria).